We begin with the raw amino-acid sequence, 241 residues long: Glutathione S-transferase omega-1 (241 aa).

Ser-2 bears the N-acetylserine mark. The GST N-terminal domain occupies 22 to 101 (GSIRIYSMRF…YLDEAYPGKK (80 aa)). Cys-32 acts as the Nucleophile in catalysis. Position 57 is an N6-acetyllysine (Lys-57). Residues Lys-59, Val-72, and 85-86 (ES) each bind glutathione. The GST C-terminal domain maps to 106–230 (DPYEKACQKM…DWQGFLELYL (125 aa)). Residue Ser-129 is modified to Phosphoserine. Residues Lys-143, Lys-148, and Lys-152 each carry the N6-acetyllysine modification.

This sequence belongs to the GST superfamily. Omega family. As to quaternary structure, homodimer. In terms of tissue distribution, ubiquitous. Highest expression in liver, pancreas, skeletal muscle, spleen, thymus, colon, blood leukocyte and heart. Lowest expression in brain, placenta and lung.

It is found in the cytoplasm. The protein resides in the cytosol. It catalyses the reaction RX + glutathione = an S-substituted glutathione + a halide anion + H(+). The enzyme catalyses L-dehydroascorbate + 2 glutathione = glutathione disulfide + L-ascorbate. The catalysed reaction is methylarsonate + 2 glutathione + H(+) = methylarsonous acid + glutathione disulfide + H2O. Its activity is regulated as follows. Monomethylarsonic acid reductase activity is competitively inhibited by 1-chloro 2,4-dinitrobenzene (CDNB) and by deoxycholate. Exhibits glutathione-dependent thiol transferase and dehydroascorbate reductase activities. Has S-(phenacyl)glutathione reductase activity. Also has glutathione S-transferase activity. Participates in the biotransformation of inorganic arsenic and reduces monomethylarsonic acid (MMA) and dimethylarsonic acid. The polypeptide is Glutathione S-transferase omega-1 (GSTO1) (Homo sapiens (Human)).